We begin with the raw amino-acid sequence, 119 residues long: Large ribosomal subunit protein bL20 (119 aa).

Belongs to the bacterial ribosomal protein bL20 family. In terms of assembly, part of the 50S ribosomal subunit.

In terms of biological role, binds directly to 23S ribosomal RNA and is necessary for the in vitro assembly process of the 50S ribosomal subunit. It is not involved in the protein synthesizing functions of that subunit. This chain is Large ribosomal subunit protein bL20 (rplT), found in Bacillus subtilis (strain 168).